Here is a 93-residue protein sequence, read N- to C-terminus: Large ribosomal subunit protein uL23c (93 aa).

The protein belongs to the universal ribosomal protein uL23 family. Part of the 50S ribosomal subunit.

It localises to the plastid. It is found in the chloroplast. Binds to 23S rRNA. This Adiantum capillus-veneris (Maidenhair fern) protein is Large ribosomal subunit protein uL23c (rpl23).